The following is a 708-amino-acid chain: Polyribonucleotide nucleotidyltransferase (708 aa).

The Mg(2+) site is built by Asp488 and Asp494. The KH domain occupies 555 to 615 (PIIKVTKVDP…ENVDKAIELI (61 aa)). An S1 motif domain is found at 625–692 (GEVLEGKVTR…DLGRLQFKRV (68 aa)).

This sequence belongs to the polyribonucleotide nucleotidyltransferase family. The cofactor is Mg(2+).

It localises to the cytoplasm. The enzyme catalyses RNA(n+1) + phosphate = RNA(n) + a ribonucleoside 5'-diphosphate. Its function is as follows. Involved in mRNA degradation. Catalyzes the phosphorolysis of single-stranded polyribonucleotides processively in the 3'- to 5'-direction. The chain is Polyribonucleotide nucleotidyltransferase from Thermotoga petrophila (strain ATCC BAA-488 / DSM 13995 / JCM 10881 / RKU-1).